The sequence spans 156 residues: Translation initiation factor IF-1, chloroplastic (156 aa).

The transit peptide at 1 to 81 directs the protein to the chloroplast; the sequence is MASLSWWNPA…RRTTSIQCLS (81 aa). The segment at 51-79 is disordered; the sequence is KSLLVKTQQQSKKKKNNSTNSRRTTSIQC. Low complexity predominate over residues 67–76; that stretch reads NSTNSRRTTS. Positions 82–151 constitute an S1-like domain; that stretch reads QEQKWTHEGS…SKGRIIYRLR (70 aa).

This sequence belongs to the IF-1 family. Component of the 30S ribosomal translation pre-initiation complex which assembles on the 30S ribosome in the order IF-2 and IF-3, IF-1 and N-formylmethionyl-tRNA(fMet); mRNA recruitment can occur at any time during PIC assembly.

It is found in the plastid. Its subcellular location is the chloroplast. Functionally, one of the essential components for the initiation of protein synthesis. Stabilizes the binding of IF-2 and IF-3 on the 30S subunit to which N-formylmethionyl-tRNA(fMet) subsequently binds. Helps modulate mRNA selection, yielding the 30S pre-initiation complex (PIC). Upon addition of the 50S ribosomal subunit IF-1, IF-2 and IF-3 are released leaving the mature 70S translation initiation complex. This Solanum lycopersicum (Tomato) protein is Translation initiation factor IF-1, chloroplastic (infA).